The sequence spans 89 residues: Exodeoxyribonuclease 7 small subunit (89 aa).

Residues 1–23 (MRPWRCVSMAKAPAAPSSTQPDP) are disordered.

It belongs to the XseB family. Heterooligomer composed of large and small subunits.

The protein localises to the cytoplasm. It catalyses the reaction Exonucleolytic cleavage in either 5'- to 3'- or 3'- to 5'-direction to yield nucleoside 5'-phosphates.. Its function is as follows. Bidirectionally degrades single-stranded DNA into large acid-insoluble oligonucleotides, which are then degraded further into small acid-soluble oligonucleotides. This is Exodeoxyribonuclease 7 small subunit from Acidovorax sp. (strain JS42).